The sequence spans 296 residues: Light-independent protochlorophyllide reductase iron-sulfur ATP-binding protein (296 aa).

Over residues 1–11 (MTSTITRKEDG) the composition is skewed to basic and acidic residues. The segment at 1-20 (MTSTITRKEDGEGSVQVKQD) is disordered. ATP is bound by residues 39–44 (GIGKST) and K68. S43 provides a ligand contact to Mg(2+). 2 residues coordinate [4Fe-4S] cluster: C124 and C158. Position 209–210 (209–210 (NR)) interacts with ATP.

Belongs to the NifH/BchL/ChlL family. Homodimer. Protochlorophyllide reductase is composed of three subunits; ChlL, ChlN and ChlB. Requires [4Fe-4S] cluster as cofactor.

It catalyses the reaction chlorophyllide a + oxidized 2[4Fe-4S]-[ferredoxin] + 2 ADP + 2 phosphate = protochlorophyllide a + reduced 2[4Fe-4S]-[ferredoxin] + 2 ATP + 2 H2O. It participates in porphyrin-containing compound metabolism; chlorophyll biosynthesis (light-independent). Its function is as follows. Component of the dark-operative protochlorophyllide reductase (DPOR) that uses Mg-ATP and reduced ferredoxin to reduce ring D of protochlorophyllide (Pchlide) to form chlorophyllide a (Chlide). This reaction is light-independent. The L component serves as a unique electron donor to the NB-component of the complex, and binds Mg-ATP. The chain is Light-independent protochlorophyllide reductase iron-sulfur ATP-binding protein from Prochlorococcus marinus (strain NATL1A).